We begin with the raw amino-acid sequence, 249 residues long: General transcription factor IIF subunit 2 (249 aa).

A2 is subject to N-acetylalanine. N6-acetyllysine occurs at positions 22, 33, and 137. S142 bears the Phosphoserine mark. The DNA site is built by G227 and H229. A Phosphoserine modification is found at S248.

The protein belongs to the TFIIF beta subunit family. As to quaternary structure, heterodimer of an alpha and a beta subunit. Interacts with HTATSF1 and GPBP1. Interacts with URI1. Interacts with GTF2B (via N-terminus); this interaction is inhibited in presence of GTF2F1. Part of TBP-based Pol II pre-initiation complex (PIC), in which Pol II core assembles with general transcription factors and other specific initiation factors including GTF2E1, GTF2E2, GTF2F1, GTF2F2, TCEA1, ERCC2, ERCC3, GTF2H2, GTF2H3, GTF2H4, GTF2H5, GTF2A1, GTF2A2, GTF2B and TBP; this large multi-subunit PIC complex mediates DNA unwinding and targets Pol II core to the transcription start site where the first phosphodiester bond forms.

Its subcellular location is the nucleus. Its function is as follows. TFIIF is a general transcription initiation factor that binds to RNA polymerase II and helps to recruit it to the initiation complex in collaboration with TFIIB. The protein is General transcription factor IIF subunit 2 (GTF2F2) of Bos taurus (Bovine).